The sequence spans 224 residues: uncharacterized protein (224 aa).

S-adenosyl-L-methionine-binding residues include Gly-177, Ile-197, and Leu-206.

Belongs to the class IV-like SAM-binding methyltransferase superfamily. RNA methyltransferase TrmH family.

This is an uncharacterized protein from Archaeoglobus fulgidus (strain ATCC 49558 / DSM 4304 / JCM 9628 / NBRC 100126 / VC-16).